We begin with the raw amino-acid sequence, 402 residues long: Galactoside 2-alpha-L-fucosyltransferase (402 aa).

Over 1-6 (MRYNSN) the chain is Cytoplasmic. The helical; Signal-anchor for type II membrane protein transmembrane segment at 7–27 (YLMYFCLVLGIFANIYVIIKI) threads the bilayer. Residues 28–402 (TLGSSHILEY…TDLNGKISKY (375 aa)) are Lumenal-facing. 3 N-linked (GlcNAc...) asparagine glycosylation sites follow: Asn-119, Asn-175, and Asn-301.

It belongs to the glycosyltransferase 11 family. May form oligomers. In terms of processing, N-glycosylated. In terms of tissue distribution, expression is restricted to pharyngeal neurons and gland cells.

It localises to the golgi apparatus. The protein localises to the golgi stack membrane. The protein operates within protein modification; protein glycosylation. Selectively catalyzes the addition of fucose in alpha 1-2 linkage to Gal-beta-(1-&gt;3)-GalNAc-alpha-R, Gal-beta-(1-&gt;3)-(GlcNAc-beta-(1-&gt;6))-GalNAc-alpha-R and Gal-beta-(1-&gt;3)-GalNAc acceptors but not Gal-beta-(1-&gt;3)-GlcNAc-beta-(1-&gt;3)-Gal-beta-(1-&gt;4)-Glc in vitro. The sequence is that of Galactoside 2-alpha-L-fucosyltransferase from Caenorhabditis elegans.